We begin with the raw amino-acid sequence, 94 residues long: MKYYDLIKSPIVTEVTNKLIERQNKYTFKVAKTANKIEIKKAFEHIFKVKVTVNTSNVLPRFKRKGKYAGYTAGYKKAVVKVTSGEKIAILAND.

The protein belongs to the universal ribosomal protein uL23 family. In terms of assembly, part of the 50S ribosomal subunit. Contacts protein L29, and trigger factor when it is bound to the ribosome.

In terms of biological role, one of the early assembly proteins it binds 23S rRNA. One of the proteins that surrounds the polypeptide exit tunnel on the outside of the ribosome. Forms the main docking site for trigger factor binding to the ribosome. The chain is Large ribosomal subunit protein uL23 from Phytoplasma australiense.